A 412-amino-acid chain; its full sequence is Serine hydroxymethyltransferase (412 aa).

(6S)-5,6,7,8-tetrahydrofolate-binding positions include leucine 120 and 124 to 126; that span reads GHL. At lysine 228 the chain carries N6-(pyridoxal phosphate)lysine. 353–355 contributes to the (6S)-5,6,7,8-tetrahydrofolate binding site; sequence SPF.

It belongs to the SHMT family. In terms of assembly, homodimer. It depends on pyridoxal 5'-phosphate as a cofactor.

The protein resides in the cytoplasm. The catalysed reaction is (6R)-5,10-methylene-5,6,7,8-tetrahydrofolate + glycine + H2O = (6S)-5,6,7,8-tetrahydrofolate + L-serine. It participates in one-carbon metabolism; tetrahydrofolate interconversion. The protein operates within amino-acid biosynthesis; glycine biosynthesis; glycine from L-serine: step 1/1. In terms of biological role, catalyzes the reversible interconversion of serine and glycine with tetrahydrofolate (THF) serving as the one-carbon carrier. This reaction serves as the major source of one-carbon groups required for the biosynthesis of purines, thymidylate, methionine, and other important biomolecules. Also exhibits THF-independent aldolase activity toward beta-hydroxyamino acids, producing glycine and aldehydes, via a retro-aldol mechanism. In Lachnoclostridium phytofermentans (strain ATCC 700394 / DSM 18823 / ISDg) (Clostridium phytofermentans), this protein is Serine hydroxymethyltransferase.